A 93-amino-acid chain; its full sequence is UPF0473 protein YrzB (93 aa).

This sequence belongs to the UPF0473 family.

This chain is UPF0473 protein YrzB (yrzB), found in Bacillus subtilis (strain 168).